We begin with the raw amino-acid sequence, 289 residues long: Diaminopimelate epimerase (289 aa).

3 residues coordinate substrate: Asn-13, Gln-52, and Asn-72. Cys-81 acts as the Proton donor in catalysis. Residues 82–83, Asn-167, Asn-201, and 219–220 contribute to the substrate site; these read GN and ER. Catalysis depends on Cys-228, which acts as the Proton acceptor. 229–230 is a substrate binding site; sequence GT.

The protein belongs to the diaminopimelate epimerase family. In terms of assembly, homodimer.

The protein localises to the cytoplasm. It carries out the reaction (2S,6S)-2,6-diaminopimelate = meso-2,6-diaminopimelate. It participates in amino-acid biosynthesis; L-lysine biosynthesis via DAP pathway; DL-2,6-diaminopimelate from LL-2,6-diaminopimelate: step 1/1. In terms of biological role, catalyzes the stereoinversion of LL-2,6-diaminopimelate (L,L-DAP) to meso-diaminopimelate (meso-DAP), a precursor of L-lysine and an essential component of the bacterial peptidoglycan. The sequence is that of Diaminopimelate epimerase from Caulobacter sp. (strain K31).